The sequence spans 459 residues: Argininosuccinate lyase (459 aa).

This sequence belongs to the lyase 1 family. Argininosuccinate lyase subfamily.

The protein resides in the cytoplasm. It catalyses the reaction 2-(N(omega)-L-arginino)succinate = fumarate + L-arginine. It participates in amino-acid biosynthesis; L-arginine biosynthesis; L-arginine from L-ornithine and carbamoyl phosphate: step 3/3. This Desulforudis audaxviator (strain MP104C) protein is Argininosuccinate lyase.